Here is a 159-residue protein sequence, read N- to C-terminus: Aspartate carbamoyltransferase regulatory chain (159 aa).

C113, C118, C142, and C145 together coordinate Zn(2+).

This sequence belongs to the PyrI family. In terms of assembly, contains catalytic and regulatory chains. Zn(2+) serves as cofactor.

Involved in allosteric regulation of aspartate carbamoyltransferase. This chain is Aspartate carbamoyltransferase regulatory chain, found in Saccharolobus islandicus (strain Y.N.15.51 / Yellowstone #2) (Sulfolobus islandicus).